A 387-amino-acid chain; its full sequence is DNA double-strand break repair protein Mre11 (387 aa).

The Mn(2+) site is built by Asp-9, His-11, Asp-50, and Asn-85. The Proton donor role is filled by His-86. Positions 150, 181, and 183 each coordinate Mn(2+). Residues 365-387 (AVLDDDADAADDDGRPTTVEEFQ) are disordered. Residues 366–375 (VLDDDADAAD) are compositionally biased toward acidic residues.

It belongs to the MRE11/RAD32 family. As to quaternary structure, homodimer. Forms a heterotetramer composed of two Mre11 subunits and two Rad50 subunits. Mn(2+) serves as cofactor.

With respect to regulation, nuclease activity is regulated by Rad50. Functionally, part of the Rad50/Mre11 complex, which is involved in the early steps of DNA double-strand break (DSB) repair. Mre11 binds to DSB ends and has both double-stranded 3'-5' exonuclease activity and single-stranded endonuclease activity. The chain is DNA double-strand break repair protein Mre11 from Halobacterium salinarum (strain ATCC 700922 / JCM 11081 / NRC-1) (Halobacterium halobium).